We begin with the raw amino-acid sequence, 422 residues long: Inositol phosphorylceramide synthase catalytic subunit aur1 (422 aa).

Residues 1-47 are Cytoplasmic-facing; sequence MSALSTLKKRLAACNRASQYKLETSLNPMPTFRLLRNTKWSWTHLQY. 2 helical membrane-spanning segments follow: residues 48 to 68 and 69 to 85; these read VFLAGNLIFACIVIESPGFWG and KFGIACLLAIALTVPLT. The Cytoplasmic portion of the chain corresponds to 86 to 87; sequence RQ. The helical transmembrane segment at 88–108 threads the bilayer; it reads IFFPAIVIITWAILFYSCRFI. Topologically, residues 109 to 159 are lumenal; the sequence is PERWRPPIWVRVLPTLENILYGSNLSSLLSKTTHSILDILAWVPYGVMHYS. Residue Asn132 is glycosylated (N-linked (GlcNAc...) asparagine). Residues 160 to 180 traverse the membrane as a helical segment; the sequence is APFIISFILFIFAPPGTLPVW. Residues 181-183 are Cytoplasmic-facing; the sequence is ART. The chain crosses the membrane as a helical span at residues 184 to 204; that stretch reads FGYMNLFGVLIQMAFPCSPPW. Residues 205-245 are Lumenal-facing; that stretch reads YENMYGLEPATYAVRGSPGGLARIDALFGTSIYTDGFSNSP. The chain crosses the membrane as a helical span at residues 246–266; sequence VVFGAFPSLHAGWAMLEALFL. Residues 267 to 274 lie on the Cytoplasmic side of the membrane; sequence SHVFPRYR. Helical transmembrane passes span 275-292 and 293-313; these read FCFYGYVLWLCWCTMYLT and HHYFVDLVGGMCLAIICFVFA. The Cytoplasmic portion of the chain corresponds to 314 to 422; that stretch reads QKLRLPQLQT…SSIFDASHLP (109 aa). Position 353 is a phosphoserine (Ser353). The interval 386 to 406 is disordered; sequence EWSVGSSSPEPLPSPAADLID.

It belongs to the AUR1 family. Component of the inositol phosphorylceramide synthase complex composed of at least aur1 and kei1.

The protein localises to the golgi apparatus. Its subcellular location is the golgi stack membrane. Inhibited by aureobasidin A (AbA). In terms of biological role, catalytic component of the inositol phosphorylceramide synthase which catalyzes the addition of a phosphorylinositol group onto ceramide to form inositol phosphorylceramide, an essential step in sphingolipid biosynthesis. The sequence is that of Inositol phosphorylceramide synthase catalytic subunit aur1 (aur1) from Schizosaccharomyces pombe (strain 972 / ATCC 24843) (Fission yeast).